The following is a 72-amino-acid chain: Probable neurotoxin pcD-996 (72 aa).

The first 19 residues, 1–19 (MNYLVMISFALLLVIGVES), serve as a signal peptide directing secretion. The 52-residue stretch at 21-72 (RDGYFVEPDNCLVYCMPSPEICDRGCKRYGATSGFCKEFSKGENFCWCKGLR) folds into the LCN-type CS-alpha/beta domain. 3 disulfides stabilise this stretch: C35/C56, C42/C66, and C46/C68. R72 is a propeptide (removed by a carboxypeptidase).

The protein belongs to the long (3 C-C) scorpion toxin superfamily. Expressed by the venom gland.

Its subcellular location is the secreted. The chain is Probable neurotoxin pcD-996 from Androctonus australis (Sahara scorpion).